A 310-amino-acid polypeptide reads, in one-letter code: Probable endonuclease 4 (310 aa).

Positions 1-31 (MNNQQSRGALGTSGATPDLPDATPGLSRNPV) are disordered. His94, His134, Glu173, Asp207, His210, His244, Asp257, His259, and Glu289 together coordinate Zn(2+).

The protein belongs to the AP endonuclease 2 family. Zn(2+) is required as a cofactor.

The enzyme catalyses Endonucleolytic cleavage to 5'-phosphooligonucleotide end-products.. Endonuclease IV plays a role in DNA repair. It cleaves phosphodiester bonds at apurinic or apyrimidinic (AP) sites, generating a 3'-hydroxyl group and a 5'-terminal sugar phosphate. The chain is Probable endonuclease 4 from Streptomyces avermitilis (strain ATCC 31267 / DSM 46492 / JCM 5070 / NBRC 14893 / NCIMB 12804 / NRRL 8165 / MA-4680).